We begin with the raw amino-acid sequence, 204 residues long: Probable chorismate pyruvate-lyase (204 aa).

3 residues coordinate substrate: Arg-78, Leu-131, and Glu-190.

This sequence belongs to the UbiC family.

The protein resides in the cytoplasm. The enzyme catalyses chorismate = 4-hydroxybenzoate + pyruvate. It participates in cofactor biosynthesis; ubiquinone biosynthesis. In terms of biological role, removes the pyruvyl group from chorismate, with concomitant aromatization of the ring, to provide 4-hydroxybenzoate (4HB) for the ubiquinone pathway. The chain is Probable chorismate pyruvate-lyase from Shewanella frigidimarina (strain NCIMB 400).